The primary structure comprises 345 residues: tRNA N6-adenosine threonylcarbamoyltransferase (345 aa).

Residues histidine 115 and histidine 119 each contribute to the Fe cation site. Substrate contacts are provided by residues 137 to 141, aspartate 170, glycine 183, aspartate 187, and asparagine 276; that span reads LVSGG. Aspartate 306 serves as a coordination point for Fe cation.

This sequence belongs to the KAE1 / TsaD family. It depends on Fe(2+) as a cofactor.

The protein resides in the cytoplasm. It carries out the reaction L-threonylcarbamoyladenylate + adenosine(37) in tRNA = N(6)-L-threonylcarbamoyladenosine(37) in tRNA + AMP + H(+). In terms of biological role, required for the formation of a threonylcarbamoyl group on adenosine at position 37 (t(6)A37) in tRNAs that read codons beginning with adenine. Is involved in the transfer of the threonylcarbamoyl moiety of threonylcarbamoyl-AMP (TC-AMP) to the N6 group of A37, together with TsaE and TsaB. TsaD likely plays a direct catalytic role in this reaction. This is tRNA N6-adenosine threonylcarbamoyltransferase from Pediococcus pentosaceus (strain ATCC 25745 / CCUG 21536 / LMG 10740 / 183-1w).